The primary structure comprises 492 residues: UPF0236 protein TTE0402 (492 aa).

The protein belongs to the UPF0236 family.

The chain is UPF0236 protein TTE0402 from Caldanaerobacter subterraneus subsp. tengcongensis (strain DSM 15242 / JCM 11007 / NBRC 100824 / MB4) (Thermoanaerobacter tengcongensis).